The primary structure comprises 103 residues: Large ribosomal subunit protein bL21 (103 aa).

The protein belongs to the bacterial ribosomal protein bL21 family. Part of the 50S ribosomal subunit. Contacts protein L20.

In terms of biological role, this protein binds to 23S rRNA in the presence of protein L20. In Borrelia garinii subsp. bavariensis (strain ATCC BAA-2496 / DSM 23469 / PBi) (Borreliella bavariensis), this protein is Large ribosomal subunit protein bL21.